The following is a 312-amino-acid chain: Methionyl-tRNA formyltransferase (312 aa).

Position 110–113 (110–113 (SLLP)) interacts with (6S)-5,6,7,8-tetrahydrofolate.

Belongs to the Fmt family.

It catalyses the reaction L-methionyl-tRNA(fMet) + (6R)-10-formyltetrahydrofolate = N-formyl-L-methionyl-tRNA(fMet) + (6S)-5,6,7,8-tetrahydrofolate + H(+). Attaches a formyl group to the free amino group of methionyl-tRNA(fMet). The formyl group appears to play a dual role in the initiator identity of N-formylmethionyl-tRNA by promoting its recognition by IF2 and preventing the misappropriation of this tRNA by the elongation apparatus. This is Methionyl-tRNA formyltransferase from Streptococcus suis (strain 05ZYH33).